The following is a 445-amino-acid chain: Phosphoglucosamine mutase (445 aa).

Catalysis depends on Ser-102, which acts as the Phosphoserine intermediate. The Mg(2+) site is built by Ser-102, Asp-241, Asp-243, and Asp-245. Ser-102 is subject to Phosphoserine.

Belongs to the phosphohexose mutase family. Mg(2+) serves as cofactor. Post-translationally, activated by phosphorylation.

The enzyme catalyses alpha-D-glucosamine 1-phosphate = D-glucosamine 6-phosphate. Functionally, catalyzes the conversion of glucosamine-6-phosphate to glucosamine-1-phosphate. The protein is Phosphoglucosamine mutase of Escherichia coli (strain 55989 / EAEC).